We begin with the raw amino-acid sequence, 595 residues long: Tumor necrosis factor receptor superfamily member 8 (595 aa).

The first 18 residues, 1 to 18, serve as a signal peptide directing secretion; that stretch reads MRVLLAALGLLFLGALRA. Over 19-385 the chain is Extracellular; sequence FPQDRPFEDT…STGKPVLDAG (367 aa). TNFR-Cys repeat units lie at residues 28–66, 68–106, and 107–150; these read TCHG…TDCR, QCEP…SRVC, and ECRP…TVCE. 8 disulfides stabilise this stretch: Cys-29-Cys-44, Cys-45-Cys-58, Cys-48-Cys-65, Cys-69-Cys-81, Cys-84-Cys-98, Cys-87-Cys-106, Cys-108-Cys-122, and Cys-131-Cys-149. The N-linked (GlcNAc...) asparagine glycan is linked to Asn-32. The N-linked (GlcNAc...) asparagine glycan is linked to Asn-101. Positions 167–238 are disordered; the sequence is KEPSSGTIPQ…PTQPCPEGSG (72 aa). Low complexity predominate over residues 179 to 194; that stretch reads PTPVSPATSSASTMPV. TNFR-Cys repeat units lie at residues 205–241, 243–281, and 282–325; these read ASKL…GDCR, QCEP…SRTC, and ECRP…TTFE. 6 disulfides stabilise this stretch: Cys-233–Cys-240, Cys-244–Cys-256, Cys-259–Cys-273, Cys-262–Cys-281, Cys-283–Cys-297, and Cys-289–Cys-300. A glycan (N-linked (GlcNAc...) asparagine) is linked at Asn-276. Residues 323-355 are disordered; sequence TFEAPPLGTQPDCNPTPENGEAPASTSPTQSLL. N-linked (GlcNAc...) asparagine glycosylation is present at Asn-336. Over residues 346–355 the composition is skewed to polar residues; it reads ASTSPTQSLL. A helical transmembrane segment spans residues 386-406; sequence PVLFWVILVLVVVVGSSAFLL. Over 407–595 the chain is Cytoplasmic; that stretch reads CHRRACRKRI…DPLPTAASGK (189 aa). Phosphoserine occurs at positions 438 and 452. 3 disordered regions span residues 438–457, 485–509, and 536–595; these read SRPR…TEPV, LQDA…STEH, and EGRG…ASGK. Residues 443 to 452 are compositionally biased toward polar residues; it reads SSTQLRSGAS. Residues 499–509 are compositionally biased toward basic and acidic residues; the sequence is DLPEPRVSTEH.

This sequence belongs to the TNFR8 family. As to quaternary structure, interacts with TRAF1, TRAF2, TRAF3 and TRAF5. Phosphorylated on serine and tyrosine residues. Isoform 2 is constitutively phosphorylated. In terms of tissue distribution, detected in alveolar macrophages (at protein level).

Its subcellular location is the cell membrane. The protein resides in the cytoplasm. In terms of biological role, receptor for TNFSF8/CD30L. May play a role in the regulation of cellular growth and transformation of activated lymphoblasts. Regulates gene expression through activation of NF-kappa-B. The polypeptide is Tumor necrosis factor receptor superfamily member 8 (Homo sapiens (Human)).